We begin with the raw amino-acid sequence, 250 residues long: HTH-type transcriptional regulator SarS (250 aa).

DNA-binding regions (H-T-H motif) lie at residues 53–76 and 177–200; these read FKKI…VLVK and LKDL…NLKK.

The protein belongs to the SarA family.

Its subcellular location is the cytoplasm. In terms of biological role, transcriptional regulator that controls expression of some virulence factors in a cell density-dependent manner. The polypeptide is HTH-type transcriptional regulator SarS (sarS) (Staphylococcus aureus (strain MRSA252)).